A 171-amino-acid chain; its full sequence is MKVFLGLLLGYSTILILTYQSPTTQHPPKEELEYWCTYAKTCDFCWDCQNDTCINKVINESISMNSIVNCRVTRDSQSQSCFYEISLKIPNYHSMECSYPRLYKHFMSMEKWRDENWPILIRHYCFYLVFSFAFAGCVAFAICKNLRLRTTMKLLMLLSILVLLSQPILNN.

3 consecutive transmembrane segments (helical) span residues 2–20 (KVFLGLLLGYSTILILTYQ), 123–143 (HYCFYLVFSFAFAGCVAFAIC), and 150–170 (TTMKLLMLLSILVLLSQPILN).

Belongs to the asfivirus MGF 110 family.

Its subcellular location is the host membrane. Plays a role in virus cell tropism, and may be required for efficient virus replication in macrophages. This chain is Protein MGF 110-12L, found in African swine fever virus (isolate Tick/Malawi/Lil 20-1/1983) (ASFV).